The chain runs to 133 residues: Putative biopolymer transport protein ExbD-like 1 (133 aa).

The Cytoplasmic portion of the chain corresponds to 1–15; that stretch reads MNYDNYWDEDKPELN. A helical transmembrane segment spans residues 16–32; that stretch reads ITPLVDVMLVLLAILMV. Over 33 to 133 the chain is Periplasmic; it reads TTPTLTYKEE…FLKVSLITSP (101 aa).

It belongs to the ExbD/TolR family.

Its subcellular location is the cell inner membrane. The polypeptide is Putative biopolymer transport protein ExbD-like 1 (Helicobacter pylori (strain J99 / ATCC 700824) (Campylobacter pylori J99)).